The sequence spans 156 residues: ATP synthase subunit b (156 aa).

The chain crosses the membrane as a helical span at residues 7-27; that stretch reads LFVQAIVFLILVLFTMKFVWP.

The protein belongs to the ATPase B chain family. In terms of assembly, F-type ATPases have 2 components, F(1) - the catalytic core - and F(0) - the membrane proton channel. F(1) has five subunits: alpha(3), beta(3), gamma(1), delta(1), epsilon(1). F(0) has three main subunits: a(1), b(2) and c(10-14). The alpha and beta chains form an alternating ring which encloses part of the gamma chain. F(1) is attached to F(0) by a central stalk formed by the gamma and epsilon chains, while a peripheral stalk is formed by the delta and b chains.

The protein localises to the cell inner membrane. F(1)F(0) ATP synthase produces ATP from ADP in the presence of a proton or sodium gradient. F-type ATPases consist of two structural domains, F(1) containing the extramembraneous catalytic core and F(0) containing the membrane proton channel, linked together by a central stalk and a peripheral stalk. During catalysis, ATP synthesis in the catalytic domain of F(1) is coupled via a rotary mechanism of the central stalk subunits to proton translocation. In terms of biological role, component of the F(0) channel, it forms part of the peripheral stalk, linking F(1) to F(0). In Acidovorax sp. (strain JS42), this protein is ATP synthase subunit b.